We begin with the raw amino-acid sequence, 204 residues long: FMN-dependent NADH:quinone oxidoreductase (204 aa).

Residues Ser10 and 15–17 (SLS) each bind FMN.

This sequence belongs to the azoreductase type 1 family. Homodimer. FMN is required as a cofactor.

The enzyme catalyses 2 a quinone + NADH + H(+) = 2 a 1,4-benzosemiquinone + NAD(+). It catalyses the reaction N,N-dimethyl-1,4-phenylenediamine + anthranilate + 2 NAD(+) = 2-(4-dimethylaminophenyl)diazenylbenzoate + 2 NADH + 2 H(+). Functionally, quinone reductase that provides resistance to thiol-specific stress caused by electrophilic quinones. Also exhibits azoreductase activity. Catalyzes the reductive cleavage of the azo bond in aromatic azo compounds to the corresponding amines. The chain is FMN-dependent NADH:quinone oxidoreductase from Rhizobium johnstonii (strain DSM 114642 / LMG 32736 / 3841) (Rhizobium leguminosarum bv. viciae).